Reading from the N-terminus, the 227-residue chain is Uridylate kinase (227 aa).

An ATP-binding site is contributed by 6-10 (KVSGK). UMP is bound at residue G43. ATP-binding residues include G44 and R48. Residues D65 and 113–119 (FQPGQST) contribute to the UMP site. 4 residues coordinate ATP: T139, N140, Y145, and D148.

The protein belongs to the UMP kinase family. In terms of assembly, homohexamer.

The protein localises to the cytoplasm. It carries out the reaction UMP + ATP = UDP + ADP. The protein operates within pyrimidine metabolism; CTP biosynthesis via de novo pathway; UDP from UMP (UMPK route): step 1/1. Inhibited by UTP. Functionally, catalyzes the reversible phosphorylation of UMP to UDP. The sequence is that of Uridylate kinase from Sulfolobus acidocaldarius (strain ATCC 33909 / DSM 639 / JCM 8929 / NBRC 15157 / NCIMB 11770).